We begin with the raw amino-acid sequence, 560 residues long: MKVWMAILISILCWQSSVWAVCPAWSPARAQEEISRLQQQIKQWDDDYWKEGKSEVEDGVYDQLSARLTQWQRCFGSEPRDVMMPPLNGAVMHPVAHTGVRKMVDKNALSLWMRERSDLWVQPKVDGVAVTLVYRDGKLNKAISRGNGLKGEDWTQKVSLISAVPQTVSGPLANSTLQGEIFLQREGHIQQQMGGINARAKVAGLMMRQDDSDTLNSLGVFVWAWPDGPQLMTDRLKELATAGFTLTQRYTRAVKNADEVARVRNEWWKAKLPFVTDGVVVRGAKEPESRHWLPGQAEWLVAWKYQPVAQVAEVKAIQFAVGKSGKISVVASLAPVMLDDKKVQRVNIGSVRRWQEWDIAPGDQILVSLAGQGIPRIDDVVWRGAERTKPTPPENRFNSLTCYFASDVCQEQFISRLVWLGSKQVLGLDGIGEAGWRALHQTHRFEHIFSWLLLTPEQLQNTPGIAKSKSAQLWHRFNLARKQPFTRWVMAMGIPLTRAALNASDERSWSQLLFSTEQFWQQLPGTGSGRARQVIEWKENAQIKKLGSWLAAQQITGFEP.

K124 serves as the catalytic N6-AMP-lysine intermediate.

Belongs to the NAD-dependent DNA ligase family. LigB subfamily.

The enzyme catalyses NAD(+) + (deoxyribonucleotide)n-3'-hydroxyl + 5'-phospho-(deoxyribonucleotide)m = (deoxyribonucleotide)n+m + AMP + beta-nicotinamide D-nucleotide.. Catalyzes the formation of phosphodiester linkages between 5'-phosphoryl and 3'-hydroxyl groups in double-stranded DNA using NAD as a coenzyme and as the energy source for the reaction. The sequence is that of DNA ligase B from Escherichia coli O139:H28 (strain E24377A / ETEC).